The primary structure comprises 268 residues: Phosphatidylglycerol--prolipoprotein diacylglyceryl transferase (268 aa).

Helical transmembrane passes span 10–30 (VALA…LIGI), 56–76 (LVFW…VLFY), 92–112 (WKGG…ALWF), 120–140 (FFEL…AGRI), 174–194 (PSQL…LWLF), 202–222 (MAVS…VEFV), and 236–256 (WLTQ…VLIW). Residue arginine 139 participates in a 1,2-diacyl-sn-glycero-3-phospho-(1'-sn-glycerol) binding.

It belongs to the Lgt family.

The protein resides in the cell inner membrane. The enzyme catalyses L-cysteinyl-[prolipoprotein] + a 1,2-diacyl-sn-glycero-3-phospho-(1'-sn-glycerol) = an S-1,2-diacyl-sn-glyceryl-L-cysteinyl-[prolipoprotein] + sn-glycerol 1-phosphate + H(+). The protein operates within protein modification; lipoprotein biosynthesis (diacylglyceryl transfer). Its function is as follows. Catalyzes the transfer of the diacylglyceryl group from phosphatidylglycerol to the sulfhydryl group of the N-terminal cysteine of a prolipoprotein, the first step in the formation of mature lipoproteins. This chain is Phosphatidylglycerol--prolipoprotein diacylglyceryl transferase, found in Pseudomonas putida (strain ATCC 47054 / DSM 6125 / CFBP 8728 / NCIMB 11950 / KT2440).